Consider the following 171-residue polypeptide: Co-chaperone protein HscB homolog (171 aa).

Residues 2 to 74 (NHFELFRLPF…ISRAEYMLSE (73 aa)) enclose the J domain.

Belongs to the HscB family. In terms of assembly, interacts with HscA and stimulates its ATPase activity.

Co-chaperone involved in the maturation of iron-sulfur cluster-containing proteins. Seems to help targeting proteins to be folded toward HscA. The protein is Co-chaperone protein HscB homolog of Photobacterium profundum (strain SS9).